The chain runs to 98 residues: Tan_12Cys (98 aa).

A signal peptide spans Met1–Asp21. Positions Arg22–Lys28 are excised as a propeptide.

This sequence belongs to the teretoxin C (TC) superfamily. Contains 6 disulfide bonds. Expressed by the venom duct.

The protein localises to the secreted. This chain is Tan_12Cys, found in Terebra anilis (Auger snail).